The chain runs to 393 residues: Na(+)/H(+) antiporter NhaA 2 (393 aa).

11 helical membrane passes run Ser18–Leu38, Leu53–Leu73, Ile91–Phe111, Gly120–Gly140, Val149–Phe169, Thr172–Leu192, Leu208–Leu228, Phe263–Met283, Val294–Val314, Gly332–Phe352, and Ile363–Ser383.

It belongs to the NhaA Na(+)/H(+) (TC 2.A.33) antiporter family.

The protein resides in the cell inner membrane. It catalyses the reaction Na(+)(in) + 2 H(+)(out) = Na(+)(out) + 2 H(+)(in). Functionally, na(+)/H(+) antiporter that extrudes sodium in exchange for external protons. The protein is Na(+)/H(+) antiporter NhaA 2 of Brucella anthropi (strain ATCC 49188 / DSM 6882 / CCUG 24695 / JCM 21032 / LMG 3331 / NBRC 15819 / NCTC 12168 / Alc 37) (Ochrobactrum anthropi).